The sequence spans 260 residues: MASTGASRSLAASPRPPQGRSSRQDKYSVLLPTYNERENLPLIVWLLVKSFSESAINYEIIIIDDGSPDGTREVAEQLAEIYGPDRILLRPREKKLGLGTAYIHGIKHATGNYVIIMDADLSHHPKFIPEFIRKQKEGNFDIVSGTRYKGNGGVYGWDLKRKIISRGANFITQILLRPGASDLTGSFRLYRKEVLQKLIEKCVSKGYVFQMEMIVRARQMNYTIGEVPISFVDRVYGESKLGGNEIVSFLKGLLTLFATT.

A disordered region spans residues 1–25 (MASTGASRSLAASPRPPQGRSSRQD). Ala-2 carries the post-translational modification N-acetylalanine. Residues Ser-3 and Ser-9 each carry the phosphoserine modification. GDP-alpha-D-mannose is bound by residues Pro-32, Tyr-34, Glu-36, Ile-63, Asp-65, Asp-118, Ala-119, Asp-120, Arg-147, Arg-234, and Lys-240. Asp-120 is a binding site for Mg(2+). Asp-120 is a Mn(2+) binding site.

Belongs to the glycosyltransferase 2 family. Component of the dolichol-phosphate mannose (DPM) synthase complex composed of DPM1, DPM2 and DPM3; within the complex, directly interacts with DPM3. This interaction may stabilize DPM1. Mg(2+) is required as a cofactor. It depends on Mn(2+) as a cofactor. The cofactor is Ca(2+).

Its subcellular location is the endoplasmic reticulum. It catalyses the reaction a di-trans,poly-cis-dolichyl phosphate + GDP-alpha-D-mannose = a di-trans,poly-cis-dolichyl beta-D-mannosyl phosphate + GDP. The protein operates within protein modification; protein glycosylation. Its function is as follows. Transfers mannose from GDP-mannose to dolichol monophosphate to form dolichol phosphate mannose (Dol-P-Man) which is the mannosyl donor in pathways leading to N-glycosylation, glycosyl phosphatidylinositol membrane anchoring, and O-mannosylation of proteins; catalytic subunit of the dolichol-phosphate mannose (DPM) synthase complex. This chain is Dolichol-phosphate mannosyltransferase subunit 1 (Dpm1), found in Mus musculus (Mouse).